A 511-amino-acid chain; its full sequence is Glucan endo-1,3-beta-glucosidase 1 (511 aa).

The N-terminal stretch at 1–28 (MAFTSMVSTVPVLFFFFTLLLISANSSS) is a signal peptide. Asn-109 carries an N-linked (GlcNAc...) asparagine glycan. The active-site Proton donor is the Glu-137. 2 N-linked (GlcNAc...) asparagine glycosylation sites follow: Asn-192 and Asn-274. Catalysis depends on Glu-284, which acts as the Nucleophile. 5 N-linked (GlcNAc...) asparagine glycosylation sites follow: Asn-374, Asn-378, Asn-407, Asn-473, and Asn-480. The cysteines at positions 382 and 445 are disulfide-linked. A lipid anchor (GPI-anchor amidated alanine) is attached at Ala-485. Residues 486-511 (AGEATSRSLSRGFCVTIMILVTFSIL) constitute a propeptide, removed in mature form.

This sequence belongs to the glycosyl hydrolase 17 family. Post-translationally, contains two additional disulfide bonds.

It is found in the cell membrane. It carries out the reaction Hydrolysis of (1-&gt;3)-beta-D-glucosidic linkages in (1-&gt;3)-beta-D-glucans.. The polypeptide is Glucan endo-1,3-beta-glucosidase 1 (Arabidopsis thaliana (Mouse-ear cress)).